A 465-amino-acid polypeptide reads, in one-letter code: RuvB-like helicase 2 (465 aa).

An ATP-binding site is contributed by 72–79; sequence GPPSTGKT.

It belongs to the RuvB family. As to quaternary structure, may form heterododecamers with RVB1. Component of the SWR1 chromatin remodeling complex, the INO80 chromatin remodeling complex, and of the R2TP complex. Interacts with dil1.

Its subcellular location is the nucleus. The catalysed reaction is ATP + H2O = ADP + phosphate + H(+). Its function is as follows. DNA helicase which participates in several chromatin remodeling complexes, including the SWR1 and the INO80 complexes. The SWR1 complex mediates the ATP-dependent exchange of histone H2A for the H2A variant HZT1 leading to transcriptional regulation of selected genes by chromatin remodeling. The INO80 complex remodels chromatin by shifting nucleosomes and is involved in DNA repair. Also involved in pre-rRNA processing. In Schizosaccharomyces pombe (strain 972 / ATCC 24843) (Fission yeast), this protein is RuvB-like helicase 2 (rvb2).